A 238-amino-acid chain; its full sequence is 1-(5-phosphoribosyl)-5-[(5-phosphoribosylamino)methylideneamino] imidazole-4-carboxamide isomerase (238 aa).

Asp-8 (proton acceptor) is an active-site residue. Asp-129 serves as the catalytic Proton donor.

Belongs to the HisA/HisF family.

Its subcellular location is the cytoplasm. It catalyses the reaction 1-(5-phospho-beta-D-ribosyl)-5-[(5-phospho-beta-D-ribosylamino)methylideneamino]imidazole-4-carboxamide = 5-[(5-phospho-1-deoxy-D-ribulos-1-ylimino)methylamino]-1-(5-phospho-beta-D-ribosyl)imidazole-4-carboxamide. It participates in amino-acid biosynthesis; L-histidine biosynthesis; L-histidine from 5-phospho-alpha-D-ribose 1-diphosphate: step 4/9. This is 1-(5-phosphoribosyl)-5-[(5-phosphoribosylamino)methylideneamino] imidazole-4-carboxamide isomerase from Lacticaseibacillus paracasei (strain ATCC 334 / BCRC 17002 / CCUG 31169 / CIP 107868 / KCTC 3260 / NRRL B-441) (Lactobacillus paracasei).